A 396-amino-acid polypeptide reads, in one-letter code: Probable peptidoglycan glycosyltransferase FtsW (396 aa).

The Cytoplasmic portion of the chain corresponds to 1 to 27 (MPFLDKVKQQYEDWTRITPSNLLYDRA). A helical membrane pass occupies residues 28–48 (LLLLFFVLLLIGLLAVSSASI). Topologically, residues 49-64 (PVGTRLFKDPFYFAKR) are periplasmic. The chain crosses the membrane as a helical span at residues 65–85 (DAIYVFLSCVTCYLCVQVPME). Residues 86 to 93 (KWEQWHVR) lie on the Cytoplasmic side of the membrane. A helical membrane pass occupies residues 94–114 (LFAFAIFLLILVLIPGIGLSV). Topologically, residues 115–122 (NGARRWIP) are periplasmic. Residues 123–143 (MVLFNFQPAEFAKLALTCFLA) form a helical membrane-spanning segment. The Cytoplasmic segment spans residues 144 to 157 (SYFTRKYDEVRSRK). Residues 158–178 (LSAFKPFALMGLMGLFLLSQP) form a helical membrane-spanning segment. Topologically, residues 179-183 (DLGST) are periplasmic. The next 2 helical transmembrane spans lie at 184 to 204 (VVLF…FWQF) and 205 to 225 (VGLM…SAYR). The Periplasmic portion of the chain corresponds to 226 to 285 (LKRFTGFLDPFKDPYGTGFQLSNSLMAFGRGEWVGEGLGNSIQKLEYLPEAHTDFVMAVV). The helical transmembrane segment at 286 to 306 (GEEFGFLGILVIVILLGLLIF) threads the bilayer. The Cytoplasmic portion of the chain corresponds to 307–323 (RAMKIGRESLLLEQRFK). Residues 324-344 (GFFAFGISFWIFFQGFVNLGM) form a helical membrane-spanning segment. Over 345–355 (SLGLLPTKGLT) the chain is Periplasmic. Residues 356 to 376 (FPLISYGGSSLIIMSMTIGLL) traverse the membrane as a helical segment. The Cytoplasmic segment spans residues 377–396 (LRIDHENRLMRIGQARLRDD).

The protein belongs to the SEDS family. FtsW subfamily.

Its subcellular location is the cell inner membrane. The catalysed reaction is [GlcNAc-(1-&gt;4)-Mur2Ac(oyl-L-Ala-gamma-D-Glu-L-Lys-D-Ala-D-Ala)](n)-di-trans,octa-cis-undecaprenyl diphosphate + beta-D-GlcNAc-(1-&gt;4)-Mur2Ac(oyl-L-Ala-gamma-D-Glu-L-Lys-D-Ala-D-Ala)-di-trans,octa-cis-undecaprenyl diphosphate = [GlcNAc-(1-&gt;4)-Mur2Ac(oyl-L-Ala-gamma-D-Glu-L-Lys-D-Ala-D-Ala)](n+1)-di-trans,octa-cis-undecaprenyl diphosphate + di-trans,octa-cis-undecaprenyl diphosphate + H(+). The protein operates within cell wall biogenesis; peptidoglycan biosynthesis. Its function is as follows. Peptidoglycan polymerase that is essential for cell division. This Pasteurella multocida (strain Pm70) protein is Probable peptidoglycan glycosyltransferase FtsW.